A 274-amino-acid polypeptide reads, in one-letter code: 3-methyl-2-oxobutanoate hydroxymethyltransferase (274 aa).

Mg(2+)-binding residues include aspartate 49 and aspartate 88. 3-methyl-2-oxobutanoate is bound by residues 49–50 (DS), aspartate 88, and lysine 118. A Mg(2+)-binding site is contributed by glutamate 120. The Proton acceptor role is filled by glutamate 187.

The protein belongs to the PanB family. Homodecamer; pentamer of dimers. Mg(2+) is required as a cofactor.

The protein localises to the cytoplasm. The enzyme catalyses 3-methyl-2-oxobutanoate + (6R)-5,10-methylene-5,6,7,8-tetrahydrofolate + H2O = 2-dehydropantoate + (6S)-5,6,7,8-tetrahydrofolate. The protein operates within cofactor biosynthesis; (R)-pantothenate biosynthesis; (R)-pantoate from 3-methyl-2-oxobutanoate: step 1/2. In terms of biological role, catalyzes the reversible reaction in which hydroxymethyl group from 5,10-methylenetetrahydrofolate is transferred onto alpha-ketoisovalerate to form ketopantoate. This chain is 3-methyl-2-oxobutanoate hydroxymethyltransferase, found in Paramagnetospirillum magneticum (strain ATCC 700264 / AMB-1) (Magnetospirillum magneticum).